The following is a 417-amino-acid chain: MAALDRSMARVEFDPDGNITDANENFLTLLGYRRDEILGKPHRQLCDGAYAQSEDYRRFWERLRRGEHFSGRCKRITREGRPLWLEATYNPVRDGQGRLLKVVKYASDIDAIVHQEHEMQSKLDALSRSMAMIEFDLDGNVLAANDNFLATMGYGRAELASANHRQFCEPGYRDGPQYADLWRRLNRGEYVTGQFRRVHRNGQPVWLEASYNPVYDADGKLYKVVKFASDVSDRMRRYQAEADNAHQAHTLSTETRTVAEHGALIIQSAVEEMLKIANTLDASSLNIGELSQHSQQITSIVNTIREIAEQTNLLALNAAIEAARAGDQGRGFAVVADEVRQLAERTSKSTKEIADMIGRIQTGTRSVIDDMQHSQEQARRGVELANEAGAAILGIRESTHKVVEAVQQFSRTLNADL.

Residues 1-66 form the PAS 1 domain; sequence MAALDRSMAR…RRFWERLRRG (66 aa). The PAC 1 domain maps to 67–114; the sequence is EHFSGRCKRITREGRPLWLEATYNPVRDGQGRLLKVVKYASDIDAIVH. A PAS 2 domain is found at 115–188; the sequence is QEHEMQSKLD…ADLWRRLNRG (74 aa). The region spanning 191 to 241 is the PAC 2 domain; it reads VTGQFRRVHRNGQPVWLEASYNPVYDADGKLYKVVKFASDVSDRMRRYQAE. Residues 242–417 enclose the Methyl-accepting transducer domain; that stretch reads ADNAHQAHTL…QFSRTLNADL (176 aa).

In terms of biological role, essential for biofilm dispersion by sensing environmental cues. May be involved in sensing and transducing signals within cells, resulting in the modulation of c-di-GMP levels, swimming motility and adhesiveness of the bacterial cell surface. The sequence is that of Biofilm dispersion protein BdlA (bdlA) from Pseudomonas aeruginosa (strain ATCC 15692 / DSM 22644 / CIP 104116 / JCM 14847 / LMG 12228 / 1C / PRS 101 / PAO1).